Consider the following 361-residue polypeptide: mRNA export factor ICP27 homolog (361 aa).

A compositionally biased stretch (low complexity) spans methionine 1–serine 15. The interval methionine 1 to alanine 107 is disordered. Residues glycine 16–proline 36 are compositionally biased toward basic and acidic residues. The RGG-box stretch occupies residues arginine 45–arginine 54. A compositionally biased stretch (basic and acidic residues) spans arginine 80–glutamate 99. Cysteine 253, histidine 328, cysteine 332, and cysteine 337 together coordinate Zn(2+). The CHC2-type zinc finger occupies cysteine 253–cysteine 337.

The protein belongs to the HHV-1 ICP27 protein family. In terms of assembly, homodimer. Homodimerization is required for transactivation. Associates in a complex with RNA, and host export factors NXF1/TAP and ALYREF; these interactions allow nuclear export of viral transcripts. Interacts with three host shuttling SR proteins SRSF1, SRSF3 and SRSF7. Interacts with host SRPK1. Interacts with IE62; this interaction enhances IE62 transactivation.

Its subcellular location is the host cytoplasm. It localises to the host nucleus. Multifunctional regulator of the expression of viral genes that mediates nuclear export of viral intronless mRNAs. This immediate early (EI) protein promotes the nuclear export of viral intronless mRNAs by interacting with mRNAs and host NXF1/TAP. This Suid herpesvirus 1 (strain Kaplan) (SuHV-1) protein is mRNA export factor ICP27 homolog.